A 433-amino-acid polypeptide reads, in one-letter code: Enolase (433 aa).

(2R)-2-phosphoglycerate is bound at residue Gln167. Glu209 serves as the catalytic Proton donor. Asp246 serves as a coordination point for Mg(2+). The Plasminogen-binding motif motif lies at 252–260 (FYDAEKKEY). The Mg(2+) site is built by Glu291 and Asp318. (2R)-2-phosphoglycerate-binding residues include Lys343, Arg372, Ser373, and Lys394. Residue Lys343 is the Proton acceptor of the active site.

This sequence belongs to the enolase family. Component of the RNA degradosome, a multiprotein complex involved in RNA processing and mRNA degradation. Requires Mg(2+) as cofactor.

It localises to the cell inner membrane. The protein resides in the cell outer membrane. Its subcellular location is the cytoplasm. The protein localises to the secreted. It is found in the cell surface. The catalysed reaction is (2R)-2-phosphoglycerate = phosphoenolpyruvate + H2O. Its pathway is carbohydrate degradation; glycolysis; pyruvate from D-glyceraldehyde 3-phosphate: step 4/5. Catalyzes the reversible conversion of 2-phosphoglycerate (2-PG) into phosphoenolpyruvate (PEP). It is essential for the degradation of carbohydrates via glycolysis. Its function is as follows. 'Moonlights' as a plasminogen receptor and plasmin activator. Binds host (human) plasminogen in vitro. Binds human plasmin and plasminogen on the cell surface; enhances the activity of host tissue-specific plasminogen activator (tPA). Plasmin bound to bacteria is partially protected from its physiological inhibitor alpha-2AP (SERPINF2). This is Enolase from Aeromonas hydrophila.